Consider the following 68-residue polypeptide: Large ribosomal subunit protein eL24 (68 aa).

Zn(2+)-binding residues include Cys-7, Cys-10, Cys-33, and Cys-37. Residues 7–37 (CSYCGREFEPGTGKMFVRNDGRVLFFCSSKC) form a C4-type zinc finger.

This sequence belongs to the eukaryotic ribosomal protein eL24 family. As to quaternary structure, part of the 50S ribosomal subunit. Forms a cluster with proteins L3 and L14. Zn(2+) serves as cofactor.

Its function is as follows. Binds to the 23S rRNA. This chain is Large ribosomal subunit protein eL24, found in Thermococcus gammatolerans (strain DSM 15229 / JCM 11827 / EJ3).